Reading from the N-terminus, the 260-residue chain is Glutamate racemase (260 aa).

Residues 14 to 15 (DS) and 46 to 47 (YG) contribute to the substrate site. The active-site Proton donor/acceptor is cysteine 77. A substrate-binding site is contributed by 78–79 (NT). Cysteine 188 acts as the Proton donor/acceptor in catalysis. 189–190 (TH) serves as a coordination point for substrate.

Belongs to the aspartate/glutamate racemases family.

It catalyses the reaction L-glutamate = D-glutamate. It functions in the pathway cell wall biogenesis; peptidoglycan biosynthesis. Its function is as follows. Provides the (R)-glutamate required for cell wall biosynthesis. In Clostridium perfringens (strain ATCC 13124 / DSM 756 / JCM 1290 / NCIMB 6125 / NCTC 8237 / Type A), this protein is Glutamate racemase.